The primary structure comprises 470 residues: Uronate isomerase (470 aa).

Belongs to the metallo-dependent hydrolases superfamily. Uronate isomerase family.

It carries out the reaction D-glucuronate = D-fructuronate. The catalysed reaction is aldehydo-D-galacturonate = keto-D-tagaturonate. Its pathway is carbohydrate metabolism; pentose and glucuronate interconversion. The protein is Uronate isomerase of Salmonella typhi.